The primary structure comprises 389 residues: Galactokinase (389 aa).

Glutamate 34 to aspartate 37 contacts substrate. Residues serine 68 and glycine 125–serine 131 each bind ATP. Mg(2+) is bound by residues serine 131 and glutamate 163. Catalysis depends on aspartate 175, which acts as the Proton acceptor. Residue tyrosine 225 coordinates substrate.

The protein belongs to the GHMP kinase family. GalK subfamily.

The protein resides in the cytoplasm. It carries out the reaction alpha-D-galactose + ATP = alpha-D-galactose 1-phosphate + ADP + H(+). It functions in the pathway carbohydrate metabolism; galactose metabolism. Functionally, catalyzes the transfer of the gamma-phosphate of ATP to D-galactose to form alpha-D-galactose-1-phosphate (Gal-1-P). This Clostridium beijerinckii (strain ATCC 51743 / NCIMB 8052) (Clostridium acetobutylicum) protein is Galactokinase.